The primary structure comprises 478 residues: Cysteine--tRNA ligase (478 aa).

Residue cysteine 29 coordinates Zn(2+). Positions alanine 31 to histidine 41 match the 'HIGH' region motif. Zn(2+) is bound by residues cysteine 207, histidine 232, and glutamate 236. The short motif at lysine 263–serine 267 is the 'KMSKS' region element. Lysine 266 is an ATP binding site.

Belongs to the class-I aminoacyl-tRNA synthetase family. As to quaternary structure, monomer. Zn(2+) is required as a cofactor.

The protein resides in the cytoplasm. The catalysed reaction is tRNA(Cys) + L-cysteine + ATP = L-cysteinyl-tRNA(Cys) + AMP + diphosphate. The protein is Cysteine--tRNA ligase of Corynebacterium jeikeium (strain K411).